The following is a 929-amino-acid chain: Urea transporter 2 (929 aa).

A compositionally biased stretch (basic and acidic residues) spans 1–11; it reads MSDHPLKEMSD. The segment at 1-89 is disordered; the sequence is MSDHPLKEMS…KRRESELPRR (89 aa). A compositionally biased stretch (low complexity) spans 31–42; the sequence is SELSSPTWPSSS. A compositionally biased stretch (basic and acidic residues) spans 55-88; the sequence is PEEKDLRSSDEDSHIVKIEKPNERSKRRESELPR. Transmembrane regions (helical) follow at residues 133-155, 162-179, 184-204, 212-232, 241-261, 310-330, 349-371, 378-399, and 400-420; these read GAAQVMFVNNPLSGLIIFIGLLI, IAGALGTVVSTLAALALS, AIASGLHGYNGMLVGLLVAVF, WWLLFPVTFASMACPVISSAL, LPVFTLPFNIALTLYLAATGH, GGVILVALFISSPLICLHAAI, IYTGLWSYNCVLSCVAIGGMFYV, LLALVCALFCAYTGAALSNMMA, and VVGVPPGTWAFCLSTLTFLLL. The disordered stretch occupies residues 451-480; that stretch reads SDEQKPPNGGGGEQSHGGGQRKAEEGSETV. Residues 458-470 show a composition bias toward gly residues; it reads NGGGGEQSHGGGQ. Position 486 is a phosphoserine (Ser-486). Transmembrane regions (helical) follow at residues 609 to 629, 647 to 667, 675 to 695, and 704 to 724; these read GILIVLGLFVQNPWWAISGCL, AIAAGLHGYNGVLVGLLMAVF, WWLLLPVIVMSMTCPILSSAL, and LPVFTLPFNIAVTLYLAATGH. N-linked (GlcNAc...) asparagine glycosylation occurs at Asn-742. A run of 4 helical transmembrane segments spans residues 773 to 793, 812 to 832, 841 to 861, and 863 to 883; these read GGIFLVALFVSSPLICLHAAI, IYFGLCGFNSTLACIAIGGMF, LLAIACALFAAYLGAALANML, and VFGLPPCTWPFCLSALTFLLL.

The protein belongs to the urea transporter family. As to quaternary structure, interacts with SNAPIN which enhances its urea transport activity. Expressed in the inner medulla of the kidney. In terms of tissue distribution, expressed in both the inner and outer renal medulla of the kidney.

It is found in the apical cell membrane. Its subcellular location is the cell membrane. It carries out the reaction urea(in) = urea(out). With respect to regulation, inhibited by phloretin. Activated by vasopressin, forskolin, 3-isobutyl-1-methylxanthine (IBMX) and cAMP. Inhibited by phloretin. Its activity is regulated as follows. Inhibited by urea analogs and phloretin and activated by forskolin. With respect to regulation, inhibited by phloretin and activated by forskolin. Functionally, mediates the transport of urea driven by a concentration gradient across the cell membrane of the kidney inner medullary collecting duct which is critical to the urinary concentrating mechanism. The protein is Urea transporter 2 (Slc14a2) of Rattus norvegicus (Rat).